A 564-amino-acid chain; its full sequence is Eukaryotic translation initiation factor 3 subunit L (564 aa).

A PCI domain is found at Asp331–Arg537.

This sequence belongs to the eIF-3 subunit L family. In terms of assembly, component of the eukaryotic translation initiation factor 3 (eIF-3) complex, which is composed of 13 subunits: EIF3A, EIF3B, EIF3C, EIF3D, EIF3E, EIF3F, EIF3G, EIF3H, EIF3I, EIF3J, EIF3K, EIF3L and EIF3M.

The protein resides in the cytoplasm. In terms of biological role, component of the eukaryotic translation initiation factor 3 (eIF-3) complex, which is involved in protein synthesis of a specialized repertoire of mRNAs and, together with other initiation factors, stimulates binding of mRNA and methionyl-tRNAi to the 40S ribosome. The eIF-3 complex specifically targets and initiates translation of a subset of mRNAs involved in cell proliferation. The protein is Eukaryotic translation initiation factor 3 subunit L of Gallus gallus (Chicken).